The sequence spans 432 residues: Adenylosuccinate synthetase (432 aa).

GTP-binding positions include 12 to 18 (GDEGKGK) and 40 to 42 (GHT). Residue Asp-13 is the Proton acceptor of the active site. Asp-13 and Gly-40 together coordinate Mg(2+). Residues 13 to 16 (DEGK), 38 to 41 (NAGH), Thr-130, Arg-144, Gln-225, Thr-240, and Arg-304 contribute to the IMP site. The Proton donor role is filled by His-41. 300–306 (ATTGRPR) contacts substrate. GTP contacts are provided by residues Arg-306, 332–334 (KLD), and 414–416 (SVG).

The protein belongs to the adenylosuccinate synthetase family. As to quaternary structure, homodimer. The cofactor is Mg(2+).

The protein resides in the cytoplasm. The enzyme catalyses IMP + L-aspartate + GTP = N(6)-(1,2-dicarboxyethyl)-AMP + GDP + phosphate + 2 H(+). The protein operates within purine metabolism; AMP biosynthesis via de novo pathway; AMP from IMP: step 1/2. Its function is as follows. Plays an important role in the de novo pathway of purine nucleotide biosynthesis. Catalyzes the first committed step in the biosynthesis of AMP from IMP. This Anaeromyxobacter dehalogenans (strain 2CP-C) protein is Adenylosuccinate synthetase.